Reading from the N-terminus, the 396-residue chain is Sialyltransferase-like protein 2 (396 aa).

Topologically, residues 1–6 are cytoplasmic; that stretch reads MKRRHL. A helical; Signal-anchor for type II membrane protein transmembrane segment spans residues 7 to 23; the sequence is PPVLVLLLLSILSLSFR. At 24 to 396 the chain is on the lumenal side; the sequence is RRLLVLQGPP…FTVPPVRLHR (373 aa). Residues N72, N260, and N304 are each glycosylated (N-linked (GlcNAc...) asparagine).

Belongs to the glycosyltransferase 29 family.

The protein resides in the golgi apparatus membrane. In terms of biological role, does not possess sialyltransferase-like activity in vitro. The polypeptide is Sialyltransferase-like protein 2 (Oryza sativa subsp. indica (Rice)).